An 87-amino-acid chain; its full sequence is uncharacterized protein (87 aa).

The protein belongs to the SF3B5 family.

This is an uncharacterized protein from Arabidopsis thaliana (Mouse-ear cress).